The sequence spans 421 residues: Queuine tRNA-ribosyltransferase accessory subunit 2 (421 aa).

Residues cysteine 328, cysteine 330, cysteine 333, and histidine 359 each contribute to the Zn(2+) site.

This sequence belongs to the queuine tRNA-ribosyltransferase family. QTRT2 subfamily. Heterodimer of a catalytic subunit and an accessory subunit. Zn(2+) serves as cofactor.

It localises to the cytoplasm. Non-catalytic subunit of the queuine tRNA-ribosyltransferase (TGT) that catalyzes the base-exchange of a guanine (G) residue with queuine (Q) at position 34 (anticodon wobble position) in tRNAs with GU(N) anticodons (tRNA-Asp, -Asn, -His and -Tyr), resulting in the hypermodified nucleoside queuosine (7-(((4,5-cis-dihydroxy-2-cyclopenten-1-yl)amino)methyl)-7-deazaguanosine). The protein is Queuine tRNA-ribosyltransferase accessory subunit 2 of Aedes aegypti (Yellowfever mosquito).